Reading from the N-terminus, the 284-residue chain is Type II methyltransferase M1.DpnII (284 aa).

S-adenosyl-L-methionine is bound by residues W17, K21, G46, D62, D177, F178, and D194.

This sequence belongs to the N(4)/N(6)-methyltransferase family. Monomer. Homodimer.

It catalyses the reaction a 2'-deoxyadenosine in DNA + S-adenosyl-L-methionine = an N(6)-methyl-2'-deoxyadenosine in DNA + S-adenosyl-L-homocysteine + H(+). Its function is as follows. An alpha subtype methylase that recognizes the double-stranded sequence 5'-GATC-3', methylates A-2 on both strands, and protects the DNA from cleavage by the DpnII endonuclease. This is Type II methyltransferase M1.DpnII from Streptococcus pneumoniae.